Here is a 397-residue protein sequence, read N- to C-terminus: pH-sensitive adenylate cyclase MT1302 (397 aa).

Residues 1 to 191 (MTDHVREADD…IQDMLFMQLR (191 aa)) form a regulatory domain region. A linker region spans residues 192 to 206 (HMMETEAVNAGERAA). Positions 211 to 397 (PGARQVTVAF…QDDDLAGSSP (187 aa)) are catalytic domain. In terms of domain architecture, Guanylate cyclase spans 217–325 (TVAFADLVGF…SPVNVASRVT (109 aa)). Aspartate 222 lines the Mn(2+) pocket. Lysine 261 serves as a coordination point for substrate. Residue aspartate 265 participates in Mn(2+) binding. Residue arginine 298 coordinates ATP. A substrate-binding site is contributed by aspartate 312.

Belongs to the adenylyl cyclase class-4/guanylyl cyclase family. In terms of assembly, homodimer. Requires Mn(2+) as cofactor. The cofactor is Mg(2+).

The catalysed reaction is ATP = 3',5'-cyclic AMP + diphosphate. In terms of biological role, catalyzes the formation of the second messenger cAMP. The chain is pH-sensitive adenylate cyclase MT1302 from Mycobacterium tuberculosis (strain CDC 1551 / Oshkosh).